The chain runs to 517 residues: Fluconazole resistance protein 1 (517 aa).

The segment at residues Cys-26–Cys-52 is a DNA-binding region (zn(2)-C6 fungal-type). Disordered regions lie at residues Lys-106 to Thr-137, Ser-250 to Gln-270, Ser-284 to Ser-307, and Gly-378 to Phe-403. The segment covering Ser-113–Ser-124 has biased composition (low complexity). Polar residues predominate over residues Ser-250–Pro-260. Residues Gln-261–Gln-270 show a composition bias toward low complexity. A compositionally biased stretch (polar residues) spans Asn-298–Ser-307. Basic residues predominate over residues Gly-388–Ser-398.

The protein resides in the nucleus. In terms of biological role, transcription factor that acts as a negative regulator of fluconazole resistance in C.albicans. Also confers fluconazole resistance in S.cerevisiae by activation of the PDR5 gene. The chain is Fluconazole resistance protein 1 (FCR1) from Candida albicans (Yeast).